A 176-amino-acid chain; its full sequence is ATP-dependent protease subunit HslV (176 aa).

The active site involves T4. Na(+)-binding residues include A159, C162, and T165.

The protein belongs to the peptidase T1B family. HslV subfamily. In terms of assembly, a double ring-shaped homohexamer of HslV is capped on each side by a ring-shaped HslU homohexamer. The assembly of the HslU/HslV complex is dependent on binding of ATP.

The protein resides in the cytoplasm. The enzyme catalyses ATP-dependent cleavage of peptide bonds with broad specificity.. Allosterically activated by HslU binding. Its function is as follows. Protease subunit of a proteasome-like degradation complex believed to be a general protein degrading machinery. The polypeptide is ATP-dependent protease subunit HslV (Wolbachia sp. subsp. Brugia malayi (strain TRS)).